The chain runs to 202 residues: V-type proton ATPase subunit E (202 aa).

The protein belongs to the V-ATPase E subunit family.

Its function is as follows. Produces ATP from ADP in the presence of a proton gradient across the membrane. The protein is V-type proton ATPase subunit E of Halothermothrix orenii (strain H 168 / OCM 544 / DSM 9562).